The following is a 1370-amino-acid chain: Putative surface protein SA2285 (1370 aa).

A signal peptide spans 1 to 50 (MRDKKGPVNKRVDFLSNKLNKYSIRKFTVGTASILIGSLMYLGTQQEAEA). Disordered regions lie at residues 77–116 (NKDTAPQGVEAKSEVTSNKDTIEHEASVKAEDISKKEDTP), 439–472 (KFNPDLAPGTEKVTREGQKGEKTITTPTLKNPLT), and 495–1344 (EYGP…TGLE). Composition is skewed to basic and acidic residues over residues 96-116 (DTIEHEASVKAEDISKKEDTP), 450-460 (KVTREGQKGEK), 504-522 (GHRDEFDPKLPTGEKEEVP), 553-569 (SIVEKEEIPFEKERKFN), 578-588 (KVTREGQKGEK), 605-618 (SKGESKEEITKDPI), 632-650 (GHRDEFDPKLPTGEKEEVP), 681-697 (SIVEKEEIPFEKERKFN), 706-716 (KVTREGQKGEK), 733-746 (SKGESKEEITKDPI), 760-778 (GHRDEFDPKLPTGEKEEVP), 809-825 (SIVEKEEIPFEKERKFN), 834-844 (KVTREGQKGEK), 861-874 (SKGESKEEITKDPI), 888-906 (GHRDEFDPKLPTGEKEEVP), 937-953 (SIVEKEEIPFKKERKFN), 962-972 (KVTREGQKGEK), 989-1002 (SKGESKEEITKDPI), 1016-1034 (GHRDEFDPKLPTGEKEEVP), 1065-1081 (SIVEKEEIPFEKERKFN), 1090-1100 (KVTREGQKGEK), 1117-1130 (SKGESKEEITKDPV), 1174-1185 (KVIEEPVDDVIK), and 1202-1221 (FETKREFNPKLQPGEERVKQ). The region spanning 418–500 (SAKNNNRIRK…NELTEYGPET (83 aa)) is the G5 1 domain. One can recognise a G5 2 domain in the interval 546–628 (YGPVKGDSIV…NELTEYGPET (83 aa)). One can recognise a G5 3 domain in the interval 674 to 756 (YGPVKGDSIV…NELTEYGPET (83 aa)). Positions 802-884 (YGPVKGDSIV…NELTEYGPET (83 aa)) constitute a G5 4 domain. Residues 930 to 1012 (YGPVKGDSIV…NELTEYGPET (83 aa)) form the G5 5 domain. The region spanning 1058 to 1140 (YGPVKGDSIV…NELTEFGGEK (83 aa)) is the G5 6 domain. The 83-residue stretch at 1186–1268 (HGPKTGTPET…DKIVEFGGEK (83 aa)) folds into the G5 7 domain. Over residues 1224-1238 (QPGSKTITTPITVNP) the composition is skewed to polar residues. A compositionally biased stretch (basic and acidic residues) spans 1252 to 1282 (EITKQPVDKIVEFGGEKPKDPKGPENPEKPS). The LPXTG sorting signal signature appears at 1338–1342 (LPKTG). Thr1341 bears the Pentaglycyl murein peptidoglycan amidated threonine mark. Residues 1342–1370 (GLESTQKGLIFSSIIGIAGLMLLARRRKN) constitute a propeptide, removed by sortase.

The protein resides in the secreted. The protein localises to the cell wall. The sequence is that of Putative surface protein SA2285 from Staphylococcus aureus (strain N315).